A 303-amino-acid chain; its full sequence is 4-sulfomuconolactone hydrolase (303 aa).

Belongs to the metallo-dependent hydrolases superfamily. Sulfomuconolactone hydrolase family. Monomer. Requires Zn(2+) as cofactor.

The enzyme catalyses 4-sulfomuconolactone + H2O = maleylacetate + sulfite + 2 H(+). Completely inhibited by ZnCl(2) and CuCl(2). Its function is as follows. Involved in the degradation of 4-sulfocatechol which is a central intermediate in the degradation of substituted sulfonated benzenes. Catalyzes the hydrolytical desulfonation of 4-sulfomuconolactone to yield maleylacetate. The protein is 4-sulfomuconolactone hydrolase of Hydrogenophaga intermedia.